The chain runs to 462 residues: L-seryl-tRNA(Sec) selenium transferase (462 aa).

An N6-(pyridoxal phosphate)lysine modification is found at lysine 294.

The protein belongs to the SelA family. In terms of assembly, homodecamer; pentamer of dimers. Binds only one seryl-tRNA(Sec) per dimer. Pyridoxal 5'-phosphate serves as cofactor.

It is found in the cytoplasm. The enzyme catalyses L-seryl-tRNA(Sec) + selenophosphate + H(+) = L-selenocysteinyl-tRNA(Sec) + phosphate. It functions in the pathway aminoacyl-tRNA biosynthesis; selenocysteinyl-tRNA(Sec) biosynthesis; selenocysteinyl-tRNA(Sec) from L-seryl-tRNA(Sec) (bacterial route): step 1/1. Converts seryl-tRNA(Sec) to selenocysteinyl-tRNA(Sec) required for selenoprotein biosynthesis. The sequence is that of L-seryl-tRNA(Sec) selenium transferase from Yersinia pestis bv. Antiqua (strain Antiqua).